The chain runs to 89 residues: Small ribosomal subunit protein uS14A (89 aa).

Belongs to the universal ribosomal protein uS14 family. As to quaternary structure, part of the 30S ribosomal subunit. Contacts proteins S3 and S10.

In terms of biological role, binds 16S rRNA, required for the assembly of 30S particles and may also be responsible for determining the conformation of the 16S rRNA at the A site. The polypeptide is Small ribosomal subunit protein uS14A (Listeria monocytogenes serovar 1/2a (strain ATCC BAA-679 / EGD-e)).